We begin with the raw amino-acid sequence, 161 residues long: MKVLEERNAFLSDYEVLKFLTDLEKKHLWDQKSLAALKKSRSKGKQNRPYNHPELQGITRNVVNYLSINKNFINQEDEGEERESSGAKDAEKSGISKMSDESFAELMTKLNSFKLFKAEKLQIVNQLPANMVHLYSIVEECDARFDEKTIEEMLEIISGYA.

The disordered stretch occupies residues 75 to 96 (QEDEGEERESSGAKDAEKSGIS). Residues 82-96 (RESSGAKDAEKSGIS) show a composition bias toward basic and acidic residues.

The protein belongs to the eukaryotic RPC9 RNA polymerase subunit family. As to quaternary structure, component of the RNA polymerase III (Pol III) complex consisting of 17 subunits. Forms a Pol III subcomplex with RPC25/RPC8. Interacts with BURF1/TDS4.

The protein localises to the nucleus. DNA-dependent RNA polymerase catalyzes the transcription of DNA into RNA using the four ribonucleoside triphosphates as substrates. Specific peripheric component of RNA polymerase III which synthesizes small RNAs, such as 5S rRNA and tRNAs. The RPC25/RPC8-RPC17/RPC9 subcomplex may bind Pol III transcripts emerging from the adjacent exit pore during elongation. This Saccharomyces cerevisiae (strain ATCC 204508 / S288c) (Baker's yeast) protein is DNA-directed RNA polymerase III subunit RPC9 (RPC17).